A 238-amino-acid chain; its full sequence is Purine nucleoside phosphorylase DeoD-type (238 aa).

Position 4 (histidine 4) interacts with a purine D-ribonucleoside. Phosphate contacts are provided by residues glycine 20, arginine 24, arginine 43, and 87 to 90; that span reads RIGS. A purine D-ribonucleoside-binding positions include 181 to 183 and 205 to 206; these read EME and SD. Aspartate 206 serves as the catalytic Proton donor.

The protein belongs to the PNP/UDP phosphorylase family. Homohexamer; trimer of homodimers.

The catalysed reaction is a purine D-ribonucleoside + phosphate = a purine nucleobase + alpha-D-ribose 1-phosphate. It catalyses the reaction a purine 2'-deoxy-D-ribonucleoside + phosphate = a purine nucleobase + 2-deoxy-alpha-D-ribose 1-phosphate. Functionally, catalyzes the reversible phosphorolytic breakdown of the N-glycosidic bond in the beta-(deoxy)ribonucleoside molecules, with the formation of the corresponding free purine bases and pentose-1-phosphate. This Mycoplasma genitalium (strain ATCC 33530 / DSM 19775 / NCTC 10195 / G37) (Mycoplasmoides genitalium) protein is Purine nucleoside phosphorylase DeoD-type.